The chain runs to 122 residues: Large ribosomal subunit protein uL14 (122 aa).

It belongs to the universal ribosomal protein uL14 family. As to quaternary structure, part of the 50S ribosomal subunit. Forms a cluster with proteins L3 and L19. In the 70S ribosome, L14 and L19 interact and together make contacts with the 16S rRNA in bridges B5 and B8.

In terms of biological role, binds to 23S rRNA. Forms part of two intersubunit bridges in the 70S ribosome. This is Large ribosomal subunit protein uL14 from Buchnera aphidicola subsp. Acyrthosiphon pisum (strain 5A).